Here is a 398-residue protein sequence, read N- to C-terminus: Bone morphogenetic protein 2-B (398 aa).

Residues 1-23 form the signal peptide; that stretch reads MVAGIHSLLLLQFYQILLSGCTG. A propeptide spanning residues 24-284 is cleaved from the precursor; that stretch reads LVPEEGKRKY…GHALHKRQKR (261 aa). 4 N-linked (GlcNAc...) asparagine glycosylation sites follow: asparagine 137, asparagine 202, asparagine 237, and asparagine 340. 3 cysteine pairs are disulfide-bonded: cysteine 298–cysteine 363, cysteine 327–cysteine 395, and cysteine 331–cysteine 397.

The protein belongs to the TGF-beta family. Homodimer; disulfide-linked.

Its subcellular location is the secreted. Functionally, induces cartilage and bone formation. The polypeptide is Bone morphogenetic protein 2-B (bmp2-b) (Xenopus laevis (African clawed frog)).